Here is a 184-residue protein sequence, read N- to C-terminus: MKPTPAELYANLISSTGEDLQRPGLQGTPARAATAFEYLTSGYKQSVQEVVNDALFPSDSNDMVVVRDIELFSLCEHHMLPFIGKAHVGYIPTGKVLGLSKVARIIDMYARRLQIQEQLTHQVASTIAEVTGAAGVGVIIEAKHLCMMMRGVEKQNSVMKTSAMLGSFRANLSTRSEFLALLNN.

The Zn(2+) site is built by Cys75, His78, and Cys146.

It belongs to the GTP cyclohydrolase I family. Homomer.

The enzyme catalyses GTP + H2O = 7,8-dihydroneopterin 3'-triphosphate + formate + H(+). It functions in the pathway cofactor biosynthesis; 7,8-dihydroneopterin triphosphate biosynthesis; 7,8-dihydroneopterin triphosphate from GTP: step 1/1. This Teredinibacter turnerae (strain ATCC 39867 / T7901) protein is GTP cyclohydrolase 1.